The following is a 624-amino-acid chain: Aliphatic sulfonate oxidoreductase, WOR-like subunit (624 aa).

The tungstopterin site is built by lysine 77, serine 93, valine 94, serine 96, histidine 195, alanine 196, glycine 198, and tyrosine 199. 3 residues coordinate [4Fe-4S] cluster: aspartate 299, cysteine 302, and cysteine 306. Positions 353, 357, 358, 359, 470, 490, 494, 495, and 496 each coordinate tungstopterin. Position 495 (cysteine 495) interacts with [4Fe-4S] cluster. Residues 552–575 (KDDDNPPRFYEPLPSGPVKGKAPN) are disordered.

Belongs to the AOR/FOR family. As to quaternary structure, heterodimer composed of a small WOR5-S subunit, with four [4Fe-4S] clusters, and a large WOR5-L subunit, containing the active site tungsto-bispyranopterin cofactor as well as another [4Fe-4S] cluster. The cofactor is [4Fe-4S] cluster. Requires tungstopterin as cofactor.

The protein resides in the cytoplasm. The catalysed reaction is an aliphatic sulfonate + 4 oxidized [4Fe-4S]-[ferredoxin] + 2 H2O = 4 reduced [4Fe-4S]-[ferredoxin] + a carboxylate + sulfite + 6 H(+). It catalyses the reaction an aliphatic sulfonate + 2 oxidized [4Fe-4S]-[ferredoxin] + H2O = 2 reduced [4Fe-4S]-[ferredoxin] + an aldehyde + sulfite + 3 H(+). The enzyme catalyses 2 oxidized [4Fe-4S]-[ferredoxin] + an aldehyde + H2O = 2 reduced [4Fe-4S]-[ferredoxin] + a carboxylate + 3 H(+). It carries out the reaction 4 oxidized [4Fe-4S]-[ferredoxin] + taurine + 2 H2O = 4 reduced [4Fe-4S]-[ferredoxin] + sulfite + glycine + 6 H(+). The catalysed reaction is 2 oxidized [4Fe-4S]-[ferredoxin] + taurine + H2O = aminoacetaldehyde + 2 reduced [4Fe-4S]-[ferredoxin] + sulfite + 3 H(+). It catalyses the reaction aminoacetaldehyde + 2 oxidized [4Fe-4S]-[ferredoxin] + H2O = 2 reduced [4Fe-4S]-[ferredoxin] + glycine + 3 H(+). WOR-like catalytic subunit of an oxidoreductase that can desulfonate and oxidize aliphatic sulfonates such as taurine. The activity involves two steps: an oxidative desulfonation reaction, followed by the activation of a second water molecule and oxidation of the resulting aldehyde. May be involved in the oxidation of various aliphatic sulfonates and also phosphonates. In vitro, has a broad substrate specificity with a high affinity for several substituted and nonsubstituted aliphatic and aromatic aldehydes with various chain lengths, with methyl viologen or benzyl viologen as electron acceptor. Ferredoxin is the physiological electron acceptor. In Pyrococcus furiosus (strain ATCC 43587 / DSM 3638 / JCM 8422 / Vc1), this protein is Aliphatic sulfonate oxidoreductase, WOR-like subunit.